The following is an 84-amino-acid chain: MKLCILLVVLLITVVRAEEDILENEAEDISPAIKERSARGCIGRNESCKFDRHGCCWPWSCSCWNKEGQPESDVWCECSLKIGK.

The N-terminal stretch at methionine 1–alanine 17 is a signal peptide. The propeptide occupies glutamate 18 to alanine 38. Cystine bridges form between cysteine 41–cysteine 56, cysteine 48–cysteine 61, cysteine 55–cysteine 78, and cysteine 63–cysteine 76.

As to expression, expressed by the venom gland.

It is found in the secreted. Antagonist of L-type calcium channels (Cav1/CACNA1). Causes paralysis in the posterior limbs and gradual decreases in movement and aggression during 24 hours at dose levels of 5 ug per mouse. This chain is U7-ctenitoxin-Pn1a, found in Phoneutria nigriventer (Brazilian armed spider).